The sequence spans 840 residues: Cullin-4 (840 aa).

Positions 1 to 11 (MTSGAPPTIST) are enriched in polar residues. A disordered region spans residues 1–82 (MTSGAPPTIS…TGNSSRTTAT (82 aa)). Positions 33 to 48 (TEAKQMRGDTENRSDG) are enriched in basic and acidic residues. Residues 69–82 (FRSQTGNSSRTTAT) are compositionally biased toward polar residues. Residues 772–831 (DRQYKIDAAVVRIMKARKQLNHQTLMTELLQQLRFPVSTADIKKRLESLIEREYISRDPE) form the Cullin neddylation domain. Lys-786 is covalently cross-linked (Glycyl lysine isopeptide (Lys-Gly) (interchain with G-Cter in NEDD8)).

This sequence belongs to the cullin family. Part of an E3 ubiquitin-protein ligase complex including cul-4 and ddb-1. Post-translationally, neddylated. Deneddylated via its interaction with the COP9 signalosome (CSN) complex.

It participates in protein modification; protein ubiquitination. Its function is as follows. Component of cullin-based E3 ubiquitin-protein ligase complexes which mediate the ubiquitination and subsequent proteasomal degradation of target proteins. The functional specificity of the E3 ubiquitin-protein ligase complex depends on the variable substrate recognition component. In association with ddb-1 directs ubiquitination of cdt-1 during S phase and is required for restraining DNA rereplication. Probably is involved in ubiquitination of cki-1. The sequence is that of Cullin-4 (cul-4) from Caenorhabditis elegans.